Reading from the N-terminus, the 418-residue chain is Chromo domain-containing protein rhino (418 aa).

Positions 24-74 constitute a Chromo domain; sequence YVVEKILGKRFVNGRPQVLVKWSGFPNENNTWEPLENVGNCMKLVSDFESE. Low complexity-rich tracts occupy residues 84–99 and 107–120; these read AKSVGKSKSSPSSSGP and SSSKKTQQHSKSVQ. Disordered stretches follow at residues 84-167 and 199-337; these read AKSV…TDST and PTKD…RCPR. Positions 131 to 143 are enriched in basic residues; that stretch reads NQKKGKNIKKTAG. Positions 152-167 are enriched in polar residues; it reads PKTQMPSTSQVSTDST. Basic and acidic residues predominate over residues 218 to 228; sequence RLIEFPQREDA. The span at 258 to 275 shows a compositional bias: low complexity; it reads GESSSSMSLPTVSSTSSE. Basic and acidic residues predominate over residues 276–285; sequence KSIKVTKSEP. The interval 353 to 418 is required for interaction with del/deadlock; sequence TKPFGVNRGL…FESLRIIVPK (66 aa).

As to quaternary structure, homodimer in solution. Dimerization is essential for chromatin binding. Component of the Rhino-Deadlock-Cutoff (RDC) complex, composed of rhi/rhino, del/deadlock and cuff/cutoff. Interacts (via C-terminus) with del/deadlock (via N-terminus); this interaction is direct. Two copies of del/deadlock associate with each rhi/rhino dimer. Interacts with cuff/cutoff; this interaction is indirect and is mediated by del/deadlock. Interacts (via Chromo domain) with kipf/kipferl (via C2H2 type zinc finger 4). Interacts (via Chromo domain) with His3/histone H3 (via N-terminus di- or tri-methylated on 'Lys-10' (H3K9me2/3)); this interaction is direct. Two His3 N-terminal tails oriented anti-parallel to each other are required for dimer binding to His3. As to expression, female specific, expressed in both somatic and germline cells but highly enriched in ovaries. In the germarium of the developing oocyte expressed in germline stem cells, cystoblasts and developing germline cysts. Expressed in nurse cells in the germarium and egg chamber.

Its subcellular location is the nucleus. The protein resides in the chromosome. Involved in piRNA (piwi-interacting RNA)-mediated transposon repression. May be involved in formation of the perinuclear nuage, a subcellular structure implicated in RNA processing that may be involved in transposon RNA surveillance and silencing. Required for ping-pong amplification during piRNA biogenesis, probably by promoting transcription of piRNA precursors. As part of the Rhino-Deadlock-Cutoff (RDC) Complex associates with, and drives non-canonical transcription of germline specific dual-strand piRNA clusters 80F, 38C and 42AB, but not single-stranded piRNA cluster 20A. Induction of piRNA expression is potentially achieved through a mechanism that prevents transcriptional termination and leads to readthrough from flanking transcription units. Recruited to specific chromatin regions by a combination of H3K9me2/3 histone methylation and differentially expressed sequence-specific recruitment factors. This association may involve direct interaction with DNA. Associates with chromatin upon exposure to homologous piRNA and facilitates transcriptional read-through. As part of the RDC complex, involved in suppression of splicing. In ovaries, recruitment to specific heterochromatin clusters is nucleated and stabilized by kipf/kipferl. During oogenesis, involved in axis specification and may regulate chromosome condensation at the onset of a mitotic-like phase that occurs during nurse cell chromosome duplication. Involved in the distribution of mRNAs for proteins that play a role in anterior-posterior and dorsal-ventral axes specification during development of the oocyte, including grk/gurken, osk/oskar and vas/vasa. Mitigates meiotic double strand breaks and interacts with DNA damage signaling to mediate axis specification. This chain is Chromo domain-containing protein rhino, found in Drosophila melanogaster (Fruit fly).